The following is a 152-amino-acid chain: Putative aryl-alcohol dehydrogenase YFL057C (152 aa).

This sequence belongs to the aldo/keto reductase family. Aldo/keto reductase 2 subfamily.

Putative aryl-alcohol dehydrogenase. In Saccharomyces cerevisiae (strain ATCC 204508 / S288c) (Baker's yeast), this protein is Putative aryl-alcohol dehydrogenase YFL057C.